Consider the following 312-residue polypeptide: MAIYLDFENHIKEIQNEIELALIRGDEDAKEILEKRLDKEVKSIYSNLTDFQKLQLARHPDRPYAMDYIDLILKDKYEVFGDRHYNDDKAIVCFIGKIDNVPVVVIGEEKGRGTKNKLLRNFGMPNPCGYRKALKMAKFAEKFNLPILMLVDTAGAYPGIGAEERGQSEAIAKNLQEFASLKVPTISVIIGEGGSGGALAIAVADKLAMMEYSIFSVISPEGCAAILWDDPSKTEVAIKAMKITPRDLKEAGLIDDIILEPSKGAHRDKFSAANTIKEYFLDALRTIQQDPHFLENRYQKLMSLGSFVESMN.

Residues 36–286 (RLDKEVKSIY…KEYFLDALRT (251 aa)) form the CoA carboxyltransferase C-terminal domain.

Belongs to the AccA family. As to quaternary structure, acetyl-CoA carboxylase is a heterohexamer composed of biotin carboxyl carrier protein (AccB), biotin carboxylase (AccC) and two subunits each of ACCase subunit alpha (AccA) and ACCase subunit beta (AccD).

It is found in the cytoplasm. It catalyses the reaction N(6)-carboxybiotinyl-L-lysyl-[protein] + acetyl-CoA = N(6)-biotinyl-L-lysyl-[protein] + malonyl-CoA. Its pathway is lipid metabolism; malonyl-CoA biosynthesis; malonyl-CoA from acetyl-CoA: step 1/1. Component of the acetyl coenzyme A carboxylase (ACC) complex. First, biotin carboxylase catalyzes the carboxylation of biotin on its carrier protein (BCCP) and then the CO(2) group is transferred by the carboxyltransferase to acetyl-CoA to form malonyl-CoA. This Helicobacter pylori (strain HPAG1) protein is Acetyl-coenzyme A carboxylase carboxyl transferase subunit alpha.